The following is a 196-amino-acid chain: Holliday junction branch migration complex subunit RuvA (196 aa).

A domain I region spans residues 1–69; that stretch reads MIVGLRGTII…EDAHLLFGFC (69 aa). The domain II stretch occupies residues 70–148; that stretch reads EEIEKQTFER…QLLQSQEESI (79 aa). The interval 149–157 is flexible linker; sequence APSNNLKYE. Residues 157–196 form a domain III region; sequence EASLALQSLGFKRNEIQKVLEHIEALSVSEIVKEALKRLA.

This sequence belongs to the RuvA family. In terms of assembly, homotetramer. Forms an RuvA(8)-RuvB(12)-Holliday junction (HJ) complex. HJ DNA is sandwiched between 2 RuvA tetramers; dsDNA enters through RuvA and exits via RuvB. An RuvB hexamer assembles on each DNA strand where it exits the tetramer. Each RuvB hexamer is contacted by two RuvA subunits (via domain III) on 2 adjacent RuvB subunits; this complex drives branch migration. In the full resolvosome a probable DNA-RuvA(4)-RuvB(12)-RuvC(2) complex forms which resolves the HJ.

The protein resides in the cytoplasm. In terms of biological role, the RuvA-RuvB-RuvC complex processes Holliday junction (HJ) DNA during genetic recombination and DNA repair, while the RuvA-RuvB complex plays an important role in the rescue of blocked DNA replication forks via replication fork reversal (RFR). RuvA specifically binds to HJ cruciform DNA, conferring on it an open structure. The RuvB hexamer acts as an ATP-dependent pump, pulling dsDNA into and through the RuvAB complex. HJ branch migration allows RuvC to scan DNA until it finds its consensus sequence, where it cleaves and resolves the cruciform DNA. The protein is Holliday junction branch migration complex subunit RuvA of Helicobacter hepaticus (strain ATCC 51449 / 3B1).